The following is a 439-amino-acid chain: DNA 3'-5' translocase XPB2 (439 aa).

The interval 1 to 54 (MVYLRYFKGLILSDAYAPGLKWSDELKAYSALAFKYRDVRKYFLEKEIEVEENV) is DRD domain. The Helicase ATP-binding domain occupies 77–221 (VKAWLKEKRG…LYPILVGPIV (145 aa)). ATP is bound by residues 90–97 (LPTGAGKT) and Arg-127. Residues 174–177 (DEVH) carry the DEAH box motif. An RED motif motif is present at residues 205 to 207 (RDD). Residues 227-234 (EELAGKYI) are flexible hinge region. Positions 248–307 (NEEKKRYDGLRKKLKDFLSSRGLKLQNLDDFHRLVKLAAKDKEAREALLAWHESLNIAVN) are thM region. The Helicase C-terminal domain occupies 311–439 (KIEKLREILQ…DYRLSRRRRE (129 aa)).

Belongs to the helicase family. RAD25/XPB subfamily. In terms of assembly, forms a heterodimer with Bax1.

It catalyses the reaction Couples ATP hydrolysis with the unwinding of duplex DNA by translocating in the 3'-5' direction.. It carries out the reaction ATP + H2O = ADP + phosphate + H(+). Its function is as follows. ATP-dependent DNA translocase which moves along double-stranded DNA (dsDNA) in a 3'-5' direction, unwinding the DNA. The ThM domain grips the resulting 3'-ssDNA tail and functions as a wedge (particularly Phe-278), breaking dsDNA base pairs, probably using the energy from ATP hydrolysis to move along dsDNA. A DNA-dependent ATPase; double-stranded DNA (dsDNA) stimulates the activity more than single-stranded DNA (ssDNA), while Bax1 stimulates ATPase more. In an in vitro assay had no detectable helicase activity. Binds ssDNA better than dsDNA. Has very low ATPase activity that is stimulated by Bax1; dsDNA, Y-form DNA and a DNA substrate with a 6 base pair (bp) bubble in the center stimulate the XPB2-Bax1 ATPase activity about 10- 20-fold more than the absence of DNA. In an XPB2-Bax1-bubble DNA crystal (12 bp of dsDNA, a 6 base bubble and 6 bp of dsDNA) the short 6 bp arm is unwound. The 2 helicase and the ThM domains of XPB2 with the NTD and CRD domains of Bax1 encircle the DNA, forming a tunnel where the 12 bp dsDNA and the ds-ssDNA junction are located. The ThM domain is wedged between the ssDNA tails, with the 5' ssDNA contacting Bax1 and the 3' ssDNA in a channel in XPB2. Bax1 increases the affinity of XPB2 for forked DNA. This Sulfurisphaera tokodaii (strain DSM 16993 / JCM 10545 / NBRC 100140 / 7) (Sulfolobus tokodaii) protein is DNA 3'-5' translocase XPB2.